The following is a 635-amino-acid chain: tRNA uridine 5-carboxymethylaminomethyl modification enzyme MnmG (635 aa).

Residue 19-24 (GAGHAG) participates in FAD binding. 280-294 (GPRYCPSIEDKIVRF) lines the NAD(+) pocket.

The protein belongs to the MnmG family. In terms of assembly, homodimer. Heterotetramer of two MnmE and two MnmG subunits. It depends on FAD as a cofactor.

It is found in the cytoplasm. NAD-binding protein involved in the addition of a carboxymethylaminomethyl (cmnm) group at the wobble position (U34) of certain tRNAs, forming tRNA-cmnm(5)s(2)U34. The chain is tRNA uridine 5-carboxymethylaminomethyl modification enzyme MnmG from Synechocystis sp. (strain ATCC 27184 / PCC 6803 / Kazusa).